The chain runs to 246 residues: MIESSSPTPPALHEGAPADVSHPRNIRSFVRRTGRTTVGQAKAFADVGPRFLLAYSGLPMDFSAVYGRDAPTILEIGFGMGEATAHIAGLMPEKNFLCCEVHTPGVGALLKRIDEQALTNIRILQHDAVEVIDHMLPLGSLDGAHIFFPDPWHKTKHNKRRLIQAPLIAKLAARLKPGGYLHCATDWQPYAEQILEVLSAEPLLKNTADAASDGYAPKPGYRPLTKFENRGIKLGHGVWDVVFTRA.

The tract at residues 1 to 23 (MIESSSPTPPALHEGAPADVSHP) is disordered. S-adenosyl-L-methionine is bound by residues Glu75, Glu100, Asp127, and Asp150. Asp150 is a catalytic residue. Lys154 provides a ligand contact to substrate. The tract at residues 156–161 (KHNKRR) is interaction with RNA. Substrate-binding positions include Asp186 and 225–228 (TKFE).

This sequence belongs to the class I-like SAM-binding methyltransferase superfamily. TrmB family.

The catalysed reaction is guanosine(46) in tRNA + S-adenosyl-L-methionine = N(7)-methylguanosine(46) in tRNA + S-adenosyl-L-homocysteine. It functions in the pathway tRNA modification; N(7)-methylguanine-tRNA biosynthesis. Catalyzes the formation of N(7)-methylguanine at position 46 (m7G46) in tRNA. This is tRNA (guanine-N(7)-)-methyltransferase from Polaromonas naphthalenivorans (strain CJ2).